The primary structure comprises 776 residues: 5-methyltetrahydropteroyltriglutamate--homocysteine methyltransferase (776 aa).

Residues 16-19 and lysine 112 each bind 5-methyltetrahydropteroyltri-L-glutamate; that span reads RELK. Residues 435–437 and glutamate 488 each bind L-homocysteine; that span reads IGS. Residues 435–437 and glutamate 488 each bind L-methionine; that span reads IGS. Residues 519–520 and tryptophan 565 contribute to the 5-methyltetrahydropteroyltri-L-glutamate site; that span reads RC. An L-homocysteine-binding site is contributed by aspartate 603. L-methionine is bound at residue aspartate 603. Glutamate 609 is a 5-methyltetrahydropteroyltri-L-glutamate binding site. The Zn(2+) site is built by histidine 645, cysteine 647, and glutamate 669. The Proton donor role is filled by histidine 698. Zn(2+) is bound at residue cysteine 730.

Belongs to the vitamin-B12 independent methionine synthase family. It depends on Zn(2+) as a cofactor.

It catalyses the reaction 5-methyltetrahydropteroyltri-L-glutamate + L-homocysteine = tetrahydropteroyltri-L-glutamate + L-methionine. Its pathway is amino-acid biosynthesis; L-methionine biosynthesis via de novo pathway; L-methionine from L-homocysteine (MetE route): step 1/1. Its function is as follows. Catalyzes the transfer of a methyl group from 5-methyltetrahydrofolate to homocysteine resulting in methionine formation. The protein is 5-methyltetrahydropteroyltriglutamate--homocysteine methyltransferase of Ralstonia pickettii (strain 12J).